Reading from the N-terminus, the 433-residue chain is Trigger factor (433 aa).

The region spanning 163–248 (GNFVVIDFVG…VKEAKVKELP (86 aa)) is the PPIase FKBP-type domain.

It belongs to the FKBP-type PPIase family. Tig subfamily.

It is found in the cytoplasm. It carries out the reaction [protein]-peptidylproline (omega=180) = [protein]-peptidylproline (omega=0). Involved in protein export. Acts as a chaperone by maintaining the newly synthesized protein in an open conformation. Functions as a peptidyl-prolyl cis-trans isomerase. The chain is Trigger factor from Geobacter metallireducens (strain ATCC 53774 / DSM 7210 / GS-15).